Consider the following 345-residue polypeptide: UDP-3-O-acylglucosamine N-acyltransferase (345 aa).

Residue His248 is the Proton acceptor of the active site.

The protein belongs to the transferase hexapeptide repeat family. LpxD subfamily. Homotrimer.

It carries out the reaction a UDP-3-O-[(3R)-3-hydroxyacyl]-alpha-D-glucosamine + a (3R)-hydroxyacyl-[ACP] = a UDP-2-N,3-O-bis[(3R)-3-hydroxyacyl]-alpha-D-glucosamine + holo-[ACP] + H(+). The protein operates within bacterial outer membrane biogenesis; LPS lipid A biosynthesis. In terms of biological role, catalyzes the N-acylation of UDP-3-O-acylglucosamine using 3-hydroxyacyl-ACP as the acyl donor. Is involved in the biosynthesis of lipid A, a phosphorylated glycolipid that anchors the lipopolysaccharide to the outer membrane of the cell. This Trichodesmium erythraeum (strain IMS101) protein is UDP-3-O-acylglucosamine N-acyltransferase.